The chain runs to 1383 residues: ATP-dependent RNA helicase TDRD9 (1383 aa).

The tract at residues Glu35–Glu82 is disordered. A compositionally biased stretch (basic and acidic residues) spans Ala36–Glu46. Residues Ser70–Ser80 are compositionally biased toward low complexity. One can recognise a Helicase ATP-binding domain in the interval Ile144–Asn310. An ATP-binding site is contributed by Gly157–Ser164. The short motif at Asp256–His259 is the DEAH box element. One can recognise a Helicase C-terminal domain in the interval Ser378–Gly545. The Tudor domain occupies His945–Leu1005.

The protein belongs to the DEAD box helicase family. DEAH subfamily. As to quaternary structure, interacts with piRNA-associated proteins PIWIL1 and PIWIL4. Predominantly expressed in reproductive organs. Detected in mitotic spermatogonia, meiotic spermatocytes (predominantly at the pachytene stage), haploid spermatids in the testis, and in growing oocytes in the ovary (at protein level).

It localises to the cytoplasm. The protein localises to the nucleus. It carries out the reaction ATP + H2O = ADP + phosphate + H(+). Its function is as follows. ATP-binding RNA helicase which plays a central role during spermatogenesis by repressing transposable elements and preventing their mobilization, which is essential for the germline integrity. Acts via the piRNA metabolic process, which mediates the repression of transposable elements during meiosis by forming complexes composed of piRNAs and Piwi proteins and governs the methylation and subsequent repression of transposons. Acts downstream of piRNA biogenesis: exclusively required for transposon silencing in the nucleus, suggesting that it acts as a nuclear effector in the nucleus together with PIWIL4. This chain is ATP-dependent RNA helicase TDRD9, found in Mus musculus (Mouse).